Reading from the N-terminus, the 592-residue chain is V-type ATP synthase alpha chain (592 aa).

233–240 (GPFGSGKT) is a binding site for ATP.

The protein belongs to the ATPase alpha/beta chains family.

It catalyses the reaction ATP + H2O + 4 H(+)(in) = ADP + phosphate + 5 H(+)(out). In terms of biological role, produces ATP from ADP in the presence of a proton gradient across the membrane. The V-type alpha chain is a catalytic subunit. This is V-type ATP synthase alpha chain from Clostridium botulinum (strain Loch Maree / Type A3).